A 360-amino-acid polypeptide reads, in one-letter code: Protein Wnt-2 (360 aa).

The signal sequence occupies residues 1 to 37 (MIPRRSCWLILLLNLLNVQSLLDASWWSTVAQLSTAL). Intrachain disulfides connect Cys80-Cys91, Cys130-Cys138, Cys140-Cys158, Cys213-Cys227, Cys215-Cys222, Cys289-Cys320, Cys305-Cys315, Cys319-Cys359, Cys335-Cys350, Cys337-Cys347, and Cys342-Cys343. Asn90 is a glycosylation site (N-linked (GlcNAc...) asparagine). Residue Ser219 is the site of O-palmitoleoyl serine; by mom-1 attachment. N-linked (GlcNAc...) asparagine glycosylation occurs at Asn352.

It belongs to the Wnt family. In terms of processing, palmitoleoylation is required for efficient binding to frizzled receptors. Depalmitoleoylation leads to Wnt signaling pathway inhibition. In terms of tissue distribution, expressed in intestine, pharynx, anterior body wall muscle, vulva, some pharyngeal neurons and SMD head neurons. Expressed along the boundary between the intestine and muscle or hypodermis, but is also expressed in the hypodermis in cells including seam cells.

The protein localises to the secreted. It is found in the extracellular space. It localises to the extracellular matrix. Ligand for members of the frizzled family of seven transmembrane receptors. Probable developmental protein. May be a signaling molecule which affects the development of discrete regions of tissues. Is likely to signal over only few cell diameters. Involved in the correct positioning of the developing nerve ring and in axon guidance of SIA and SIB neurons, probably by binding to tyrosine kinase receptor cam-1. In addition, regulates the positioning of some head neuronal cells, muscle arms associated with the nerve ring and the excretory pore. Together with Wnt ligand cwn-1, regulates the migration of CAN, ALM, BDU and HSN neurons during embryogenesis, the migration of QL and QR neuroblast descendants during larval development, and polarity of ALM neurons. May act through the wnt receptor cfz-2 to regulate QR neuroblast descendant migration, and to direct ALM migration. Also plays a role in axon growth and guidance in HSN and male CP neurons. In addition, together with wnt ligand cwn-1, negatively regulates developmental neurite pruning of AIM neurons probably by acting as a ligand for receptor tyrosine kinase cam-1. Through the cam-1 receptor also probably regulates the outgrowth of neurites from RME GABAergic motor neurons. May act redundantly with other Wnt ligands such as cwn-1 and mom-2 to control seam cell polarity. This is Protein Wnt-2 from Caenorhabditis elegans.